The chain runs to 622 residues: Putative DEAD-box ATP-dependent RNA helicase 44 (622 aa).

The tract at residues 50 to 97 is disordered; that stretch reads DRRSIVQISRSNSDNDDGNRPRDVKRERHRSHDHDRNRESDREFRERE. A compositionally biased stretch (basic and acidic residues) spans 66–97; that stretch reads DGNRPRDVKRERHRSHDHDRNRESDREFRERE. The region spanning 241–436 is the Helicase ATP-binding domain; that stretch reads IPLGLEQRDV…RKFLRNPVVV (196 aa). 254–261 is an ATP binding site; sequence SATGSGKT. The DEAD box motif lies at 367–370; sequence DEAD. A Helicase C-terminal domain is found at 460 to 606; that stretch reads RLKKLIDDLG…LVPPELARHE (147 aa).

The protein belongs to the DEAD box helicase family. DDX23/PRP28 subfamily.

It catalyses the reaction ATP + H2O = ADP + phosphate + H(+). This Arabidopsis thaliana (Mouse-ear cress) protein is Putative DEAD-box ATP-dependent RNA helicase 44 (RH44).